Here is an 808-residue protein sequence, read N- to C-terminus: Glycerol-3-phosphate acyltransferase (808 aa).

Residues 306–311 (HRSHMD) carry the HXXXXD motif motif.

It belongs to the GPAT/DAPAT family.

The protein resides in the cell inner membrane. It catalyses the reaction sn-glycerol 3-phosphate + an acyl-CoA = a 1-acyl-sn-glycero-3-phosphate + CoA. It participates in phospholipid metabolism; CDP-diacylglycerol biosynthesis; CDP-diacylglycerol from sn-glycerol 3-phosphate: step 1/3. The polypeptide is Glycerol-3-phosphate acyltransferase (Vibrio parahaemolyticus serotype O3:K6 (strain RIMD 2210633)).